The primary structure comprises 2621 residues: Nonribosomal peptide synthetase dtpA (2621 aa).

The adenylation 1 stretch occupies residues cysteine 446–arginine 844. The region spanning glutamine 978–serine 1054 is the Carrier 1 domain. At serine 1015 the chain carries O-(pantetheine 4'-phosphoryl)serine. Positions glutamate 1095–glutamine 1506 are condensation 1. The segment at serine 1534–arginine 1930 is adenylation 2. Positions glutamine 2071–isoleucine 2147 constitute a Carrier 2 domain. Position 2108 is an O-(pantetheine 4'-phosphoryl)serine (serine 2108). Residues alanine 2220–aspartate 2618 form a condensation 2 region.

This sequence belongs to the NRP synthetase family.

Its pathway is alkaloid biosynthesis. Its function is as follows. Nonribosomal peptide synthetase; part of the gene cluster that mediates the biosynthesis of the dimeric diketopiperazine alkaloid ditryptophenaline. The nonribosomal peptide synthase dtpA accepts L-tryptophan and L-phenylalanine as its substrates and forms the phenylalanyl-tryptophanyl cyclic dipeptide product cyclophenylalanyltryptophenyl. The N-methyltransferase dtpB is responsible for the N-methylation of cyclophenylalanyltryptophenyl to yield cyclo-N-methylphenylalanyltryptophenyl. The cytochrome P450 monooxygenase is responsible not only for pyrroloindole ring formation but also for concurrent dimerization of N-methylphenylalanyltryptophanyl diketopiperazine monomers into a homodimeric product. The chain is Nonribosomal peptide synthetase dtpA from Aspergillus flavus (strain ATCC 200026 / FGSC A1120 / IAM 13836 / NRRL 3357 / JCM 12722 / SRRC 167).